Here is an 89-residue protein sequence, read N- to C-terminus: Small ribosomal subunit protein uS17 (89 aa).

This sequence belongs to the universal ribosomal protein uS17 family. As to quaternary structure, part of the 30S ribosomal subunit.

One of the primary rRNA binding proteins, it binds specifically to the 5'-end of 16S ribosomal RNA. The chain is Small ribosomal subunit protein uS17 from Syntrophomonas wolfei subsp. wolfei (strain DSM 2245B / Goettingen).